The following is a 360-amino-acid chain: Peptide chain release factor 1 (360 aa).

The residue at position 236 (Gln-236) is an N5-methylglutamine.

Belongs to the prokaryotic/mitochondrial release factor family. Post-translationally, methylated by PrmC. Methylation increases the termination efficiency of RF1.

The protein localises to the cytoplasm. Peptide chain release factor 1 directs the termination of translation in response to the peptide chain termination codons UAG and UAA. The chain is Peptide chain release factor 1 from Limosilactobacillus fermentum (strain NBRC 3956 / LMG 18251) (Lactobacillus fermentum).